Here is a 216-residue protein sequence, read N- to C-terminus: MSITAAQVNELRKATGAGLMDCKKALTETGGDHEKAIDYLRTKGLAAASKKAGRAATEGLVGSYIHAGGKIGVLVEVNCETDFVAKNENFQGFVKDIAMHIAAASPLYVRREEVPAELIEREKAIYREKAKESGKPAAIIEKILDGQINKFFADICLLEQTYVKDPDKTIQTFLNETIASIGENMSIRRFAKFVLGEGLAKKESDFAAEVAAAVGQ.

The interval 81 to 84 (TDFV) is involved in Mg(2+) ion dislocation from EF-Tu.

It belongs to the EF-Ts family.

It is found in the cytoplasm. Its function is as follows. Associates with the EF-Tu.GDP complex and induces the exchange of GDP to GTP. It remains bound to the aminoacyl-tRNA.EF-Tu.GTP complex up to the GTP hydrolysis stage on the ribosome. This Citrifermentans bemidjiense (strain ATCC BAA-1014 / DSM 16622 / JCM 12645 / Bem) (Geobacter bemidjiensis) protein is Elongation factor Ts.